The following is a 300-amino-acid chain: MLSAAEGILLSIATVEAGLGVLGNTFIALVNCMDWAKNNKLSMTGFLLIGLATSRIFIVWLLTLDAYAKLFYPSKYFSSSLIEIISYIWMTVNHLTVWFATSLSIFYFLKIANFSDCVFLWLKRRTDKAFVFLLGCLLTSWVISFSFVVKVMKDGKVNHRNRTSEMYWEKRQFTINYVFLNIGVISLFMMTLTACFLLIMSLWRHSRQMQSGVSGFRDLNTEAHVKAIKFLISFIILFVLYFIGVSIEIICIFIPENKLLFIFGFTTASIYPCCHSFILILSNSQLKQAFVKVLQGLKFF.

At 1–7 (MLSAAEG) the chain is on the extracellular side. The chain crosses the membrane as a helical span at residues 8–28 (ILLSIATVEAGLGVLGNTFIA). The Cytoplasmic segment spans residues 29-43 (LVNCMDWAKNNKLSM). Residues 44–64 (TGFLLIGLATSRIFIVWLLTL) form a helical membrane-spanning segment. The Extracellular segment spans residues 65-87 (DAYAKLFYPSKYFSSSLIEIISY). Residues 88-108 (IWMTVNHLTVWFATSLSIFYF) form a helical membrane-spanning segment. The Cytoplasmic segment spans residues 109-128 (LKIANFSDCVFLWLKRRTDK). The helical transmembrane segment at 129–149 (AFVFLLGCLLTSWVISFSFVV) threads the bilayer. The Extracellular portion of the chain corresponds to 150-181 (KVMKDGKVNHRNRTSEMYWEKRQFTINYVFLN). N-linked (GlcNAc...) asparagine glycosylation is present at Asn-161. Residues 182-202 (IGVISLFMMTLTACFLLIMSL) traverse the membrane as a helical segment. Topologically, residues 203–233 (WRHSRQMQSGVSGFRDLNTEAHVKAIKFLIS) are cytoplasmic. The chain crosses the membrane as a helical span at residues 234–254 (FIILFVLYFIGVSIEIICIFI). Topologically, residues 255-259 (PENKL) are extracellular. A helical membrane pass occupies residues 260 to 280 (LFIFGFTTASIYPCCHSFILI). Topologically, residues 281–300 (LSNSQLKQAFVKVLQGLKFF) are cytoplasmic.

Belongs to the G-protein coupled receptor T2R family. In terms of tissue distribution, expressed in subsets of taste receptor cells of the tongue and palate epithelium and exclusively in gustducin-positive cells. Expressed in gastric and duodenal tissues.

It localises to the membrane. In terms of biological role, gustducin-coupled cycloheximide receptor implicated in the perception of bitter compounds in the oral cavity and the gastrointestinal tract. Signals through PLCB2 and the calcium-regulated cation channel TRPM5. The protein is Taste receptor type 2 member 105 (Tas2r105) of Mus musculus (Mouse).